A 323-amino-acid chain; its full sequence is Lipoyl synthase (323 aa).

The [4Fe-4S] cluster site is built by C69, C74, C80, C95, C99, C102, and S310. A Radical SAM core domain is found at 81-299; sequence WTHGTLTVMI…EAWGYELGFR (219 aa).

Belongs to the radical SAM superfamily. Lipoyl synthase family. The cofactor is [4Fe-4S] cluster.

It localises to the cytoplasm. It carries out the reaction [[Fe-S] cluster scaffold protein carrying a second [4Fe-4S](2+) cluster] + N(6)-octanoyl-L-lysyl-[protein] + 2 oxidized [2Fe-2S]-[ferredoxin] + 2 S-adenosyl-L-methionine + 4 H(+) = [[Fe-S] cluster scaffold protein] + N(6)-[(R)-dihydrolipoyl]-L-lysyl-[protein] + 4 Fe(3+) + 2 hydrogen sulfide + 2 5'-deoxyadenosine + 2 L-methionine + 2 reduced [2Fe-2S]-[ferredoxin]. The protein operates within protein modification; protein lipoylation via endogenous pathway; protein N(6)-(lipoyl)lysine from octanoyl-[acyl-carrier-protein]: step 2/2. Functionally, catalyzes the radical-mediated insertion of two sulfur atoms into the C-6 and C-8 positions of the octanoyl moiety bound to the lipoyl domains of lipoate-dependent enzymes, thereby converting the octanoylated domains into lipoylated derivatives. The protein is Lipoyl synthase of Thermus thermophilus (strain ATCC 27634 / DSM 579 / HB8).